The chain runs to 343 residues: 3-dehydroquinate synthase (343 aa).

NAD(+) contacts are provided by residues 61–66 (SGEKYK), 95–99 (GVISD), 119–120 (TT), Lys132, Lys141, and 159–162 (FLKT). Residues Glu174, His231, and His248 each contribute to the Zn(2+) site.

This sequence belongs to the sugar phosphate cyclases superfamily. Dehydroquinate synthase family. It depends on Co(2+) as a cofactor. Requires Zn(2+) as cofactor. NAD(+) is required as a cofactor.

It is found in the cytoplasm. It catalyses the reaction 7-phospho-2-dehydro-3-deoxy-D-arabino-heptonate = 3-dehydroquinate + phosphate. Its pathway is metabolic intermediate biosynthesis; chorismate biosynthesis; chorismate from D-erythrose 4-phosphate and phosphoenolpyruvate: step 2/7. In terms of biological role, catalyzes the conversion of 3-deoxy-D-arabino-heptulosonate 7-phosphate (DAHP) to dehydroquinate (DHQ). The chain is 3-dehydroquinate synthase from Helicobacter pylori (strain G27).